The following is a 441-amino-acid chain: Pre-mRNA-splicing factor PRP46 (441 aa).

Disordered stretches follow at residues 1-22 (MPVA…NEPS) and 81-107 (MGAS…LTNL). The span at 83-107 (ASSSALTKHTPSASQPTTHDSLTNL) shows a compositional bias: polar residues. 7 WD repeats span residues 130–169 (GHQG…LRLT), 172–211 (GHIM…VVRH), 214–253 (GHLS…PVVV), 256–295 (GHKS…TMTT), 298–336 (HHKK…LVLN), 339–379 (DQNA…QSTQ), and 388–427 (ESEN…TAES).

The protein belongs to the WD repeat PRL1/PRL2 family. In terms of assembly, associated with the spliceosome.

Its subcellular location is the cytoplasm. It is found in the nucleus. Involved in pre-mRNA splicing and required for cell cycle progression at G2/M. This is Pre-mRNA-splicing factor PRP46 (PRP46) from Yarrowia lipolytica (strain CLIB 122 / E 150) (Yeast).